We begin with the raw amino-acid sequence, 349 residues long: uncharacterized protein (349 aa).

Residues 1–25 (MNKYIKQGAPILGILLAVMFGGREG) form the signal peptide.

Belongs to the bacterial solute-binding protein 1 family. WtpA subfamily.

This is an uncharacterized protein from Methanococcus aeolicus (strain ATCC BAA-1280 / DSM 17508 / OCM 812 / Nankai-3).